Here is a 401-residue protein sequence, read N- to C-terminus: ADP-forming sulfoacetate-CoA ligase subunit SqwK (401 aa).

The ATP-grasp domain maps to 9 to 217 (KTVFSEHKIP…DNSVFRQPRF (209 aa)). 35–96 (KSVGFPSVVK…EEAVHIDKEI (62 aa)) contacts ATP. Mg(2+) contacts are provided by E185 and N187.

This sequence belongs to the succinate/malate CoA ligase beta subunit family. Forms a complex with SqwL. Requires Mg(2+) as cofactor.

The enzyme catalyses sulfoacetate + ATP + CoA = sulfoacetyl-CoA + ADP + phosphate. Its function is as follows. Part of a variant of the sulfo-TK pathway, a D-sulfoquinovose degradation pathway that produces sulfoacetate. Hydrolyzes sulfoacetyl-coenzyme A (sulfoacetyl-CoA) to produce sulfoacetate and CoA coupled with the phosphorylation of ADP to generate ATP. Cannot use succinate, acetate or 3-hydroxypropionate, and shows only residual activities with malonate and 3-sulfopropanoate. This chain is ADP-forming sulfoacetate-CoA ligase subunit SqwK, found in Acholeplasma sp.